Here is a 203-residue protein sequence, read N- to C-terminus: ESCRT-related protein CHMP1B (203 aa).

2 coiled-coil regions span residues 13–51 and 109–140; these read DLKF…MDGA and GNLQ…NAMA. The disordered stretch occupies residues 172 to 203; sequence PQPAGHAIPTKTEEKVDEDDLSRRLAELKARG. A compositionally biased stretch (basic and acidic residues) spans 192-203; the sequence is LSRRLAELKARG.

The protein belongs to the SNF7 family. Interacts with CHMP1A and LIP5. Interacts with VPS2.2.

The protein localises to the cytoplasm. Its subcellular location is the endosome membrane. Functionally, involved in ESCRT-dependent multivesicular body (MVB) formation and sorting of endosomal cargo proteins into MVBs. Mediates the MVB sorting of the auxin carriers PIN1, PIN2 and AUX1. Required for embryonic axis establishment and seedling growth. Required for autophagic degradation of plastid proteins. Promotes the efficient sequestration of cargo from plastids into autophagosomes. Mediates the efficient delivery of autophagic plastid bodies to the vacuole, but not into the cytoplasm. In Arabidopsis thaliana (Mouse-ear cress), this protein is ESCRT-related protein CHMP1B.